The following is a 602-amino-acid chain: Sodium-independent sulfate anion transporter (602 aa).

The Extracellular portion of the chain corresponds to 1 to 47 (MSPPMSPMKPPKGFAPMSCCWSTETMQKWLPFLGWLPDYTWYALKMD). The chain crosses the membrane as a helical span at residues 48–68 (FIAGISVGLTVIPQALAYAEV). Residue Ala-69 is a topological domain, cytoplasmic. The helical transmembrane segment at 70–90 (GLPPQYGLYSAFMGCFVYFFL) threads the bilayer. Topologically, residues 91–115 (GTSRDVTLGPTAIMSLLVSFYTFHE) are extracellular. Residues 116–136 (PAYAVLLAFLTGCIQLGMGFL) traverse the membrane as a helical segment. Topologically, residues 137–143 (RLGLLLD) are cytoplasmic. A helical transmembrane segment spans residues 144 to 164 (FISCPVIKGFTSAAAIIIGFG). The Extracellular segment spans residues 165–193 (QIKNLLGLQHIPRQFFLQVYYTFHNIGET). A helical transmembrane segment spans residues 194–214 (RVGDAVLGLVCMVLLLVLKLM). The Cytoplasmic portion of the chain corresponds to 215-246 (RDHVPPVHPEMPTGVRLSHGLVWTATTARNAL). The chain crosses the membrane as a helical span at residues 247–267 (VVSFAALVAYSFQVTGYQPFV). Residues 268–300 (LTGKTPEGLPDAHIPPFSVTTANGTISFTEMVQ) are Extracellular-facing. The chain crosses the membrane as a helical span at residues 301–321 (GMGAGLVVVPLMGLLESIAVA). The Cytoplasmic portion of the chain corresponds to 322 to 337 (KSFASQNNYRINSNQE). A helical membrane pass occupies residues 338–358 (LLALGFTNILGSLFSSYPVTG). Residues 359 to 370 (SFGRTAVNAQSG) are Extracellular-facing. A helical membrane pass occupies residues 371–391 (VCTPAGGLMTGALVLLSLDYL). At 392 to 394 (TSL) the chain is on the cytoplasmic side. The chain crosses the membrane as a helical span at residues 395-415 (FYYIPKSALAAVIIMAVVPLF). The Extracellular portion of the chain corresponds to 416 to 438 (DTKIVKTLWRVKRLDLLPLCVTF). A helical transmembrane segment spans residues 439–459 (LLCFWEVQYGILAGTLVSVLI). Residues 460–602 (LLHSVARPKI…PEHKIALLKA (143 aa)) lie on the Cytoplasmic side of the membrane. Positions 466–580 (RPKIQVSEGP…EAEKYLKQEP (115 aa)) constitute an STAS domain.

This sequence belongs to the SLC26A/SulP transporter (TC 2.A.53) family.

The protein resides in the cell membrane. Its subcellular location is the lysosome membrane. It localises to the apical cell membrane. It is found in the basolateral cell membrane. It carries out the reaction hydrogencarbonate(in) + chloride(out) = hydrogencarbonate(out) + chloride(in). It catalyses the reaction sulfate(in) + H(+)(in) = sulfate(out) + H(+)(out). The enzyme catalyses oxalate(in) + chloride(out) = oxalate(out) + chloride(in). In terms of biological role, sodium-independent anion exchanger mediating bicarbonate, chloride, sulfate and oxalate transport. Exhibits sodium-independent sulfate anion transporter activity that may cooperate with SLC26A2 to mediate DIDS-sensitive sulfate uptake into high endothelial venules endothelial cells (HEVEC). In the kidney, mediates chloride-bicarbonate exchange, facilitating V-ATPase-mediated acid secretion. May function as a chloride channel, playing an important role in moderating chloride homeostasis and neuronal activity in the cerebellum. The chain is Sodium-independent sulfate anion transporter from Bos taurus (Bovine).